The primary structure comprises 361 residues: Anhydro-N-acetylmuramic acid kinase (361 aa).

10-17 lines the ATP pocket; sequence GTSLDGVD.

The protein belongs to the anhydro-N-acetylmuramic acid kinase family.

It carries out the reaction 1,6-anhydro-N-acetyl-beta-muramate + ATP + H2O = N-acetyl-D-muramate 6-phosphate + ADP + H(+). Its pathway is amino-sugar metabolism; 1,6-anhydro-N-acetylmuramate degradation. It functions in the pathway cell wall biogenesis; peptidoglycan recycling. Its function is as follows. Catalyzes the specific phosphorylation of 1,6-anhydro-N-acetylmuramic acid (anhMurNAc) with the simultaneous cleavage of the 1,6-anhydro ring, generating MurNAc-6-P. Is required for the utilization of anhMurNAc either imported from the medium or derived from its own cell wall murein, and thus plays a role in cell wall recycling. In Gluconobacter oxydans (strain 621H) (Gluconobacter suboxydans), this protein is Anhydro-N-acetylmuramic acid kinase.